The chain runs to 569 residues: Isochorismate synthase 1, chloroplastic (569 aa).

The transit peptide at 1 to 45 (MASLQFSSQFLGSNTKTHSSIISISRSYSPTPFTRFSRKKYESCS) directs the protein to the chloroplast.

Belongs to the isochorismate synthase family. In terms of assembly, monomer. It depends on Mg(2+) as a cofactor. In terms of tissue distribution, leaves.

It localises to the plastid. The protein resides in the chloroplast. The catalysed reaction is chorismate = isochorismate. The protein operates within siderophore biosynthesis; salicylate biosynthesis. Its function is as follows. Isochorismate synthase involved in the synthesis of salicylic acid (SA) required for both local and systemic acquired resistance (LAR and SAR) while SA synthesized through the phenylalanine ammonium lyase (PAL) pathway seems to potentiate plant cell death. Also involved in phylloquinone (vitamin K1) synthesis. Has no isochorismate pyruvate lyase (IPL) activity. The polypeptide is Isochorismate synthase 1, chloroplastic (ICS1) (Arabidopsis thaliana (Mouse-ear cress)).